We begin with the raw amino-acid sequence, 192 residues long: uncharacterized protein (192 aa).

One can recognise a Nudix hydrolase domain in the interval 29–160; the sequence is HRQAAVLIPI…PLDIYRRGDS (132 aa). The Nudix box motif lies at 67 to 89; it reads GAVDDTDASVIAAALREAEEEVA. Residues E83 and E87 each contribute to the Mg(2+) site.

This sequence belongs to the Nudix hydrolase family. PCD1 subfamily. Mn(2+) is required as a cofactor. Requires Mg(2+) as cofactor.

Functionally, probably mediates the hydrolysis of some nucleoside diphosphate derivatives. This is an uncharacterized protein from Shigella sonnei (strain Ss046).